A 244-amino-acid polypeptide reads, in one-letter code: Ureidoacrylate amidohydrolase RutB (244 aa).

The active-site Proton acceptor is Asp38. Lys147 is a catalytic residue. Cys180 acts as the Nucleophile in catalysis.

It belongs to the isochorismatase family. RutB subfamily.

It catalyses the reaction (Z)-3-ureidoacrylate + H2O + H(+) = (Z)-3-aminoacrylate + NH4(+) + CO2. It carries out the reaction (Z)-3-ureidoacrylate + H2O = (Z)-3-aminoacrylate + carbamate + H(+). The enzyme catalyses (Z)-2-methylureidoacrylate + H2O + H(+) = (Z)-2-methylaminoacrylate + NH4(+) + CO2. In terms of biological role, hydrolyzes ureidoacrylate to form aminoacrylate and carbamate. The carbamate hydrolyzes spontaneously, thereby releasing one of the nitrogen atoms of the pyrimidine ring as ammonia and one of its carbon atoms as CO2. This is Ureidoacrylate amidohydrolase RutB from Escherichia coli O1:K1 / APEC.